Reading from the N-terminus, the 215-residue chain is S-crystallin 4 (215 aa).

One can recognise a GST N-terminal domain in the interval 2–80 (PSYTLHYFNH…YLAREFGFHG (79 aa)). Positions 82–215 (NNMDMARVDY…YLQKRSRTEF (134 aa)) constitute a GST C-terminal domain.

This sequence belongs to the GST superfamily. As to expression, lens.

S-crystallins are structural components of squids and octopi eye lens. Contains relatively little if any GST activity. The protein is S-crystallin 4 of Enteroctopus dofleini (North Pacific giant octopus).